An 88-amino-acid polypeptide reads, in one-letter code: Small ribosomal subunit protein bS20 (88 aa).

This sequence belongs to the bacterial ribosomal protein bS20 family.

Binds directly to 16S ribosomal RNA. The chain is Small ribosomal subunit protein bS20 from Nitrobacter winogradskyi (strain ATCC 25391 / DSM 10237 / CIP 104748 / NCIMB 11846 / Nb-255).